The chain runs to 293 residues: Small ribosomal subunit biogenesis GTPase RsgA (293 aa).

Residues 63–223 (KNELVRPPIA…VADTPGFSSL (161 aa)) enclose the CP-type G domain. GTP contacts are provided by residues 112–115 (SKMD) and 166–174 (GQSGVGKSS). Cys247, Cys252, His254, and Cys260 together coordinate Zn(2+).

The protein belongs to the TRAFAC class YlqF/YawG GTPase family. RsgA subfamily. In terms of assembly, monomer. Associates with 30S ribosomal subunit, binds 16S rRNA. Zn(2+) is required as a cofactor.

Its subcellular location is the cytoplasm. One of several proteins that assist in the late maturation steps of the functional core of the 30S ribosomal subunit. Helps release RbfA from mature subunits. May play a role in the assembly of ribosomal proteins into the subunit. Circularly permuted GTPase that catalyzes slow GTP hydrolysis, GTPase activity is stimulated by the 30S ribosomal subunit. In Bacillus cytotoxicus (strain DSM 22905 / CIP 110041 / 391-98 / NVH 391-98), this protein is Small ribosomal subunit biogenesis GTPase RsgA.